The following is a 954-amino-acid chain: Protein translocase subunit SecA (954 aa).

Residues Gln-86, 104–108, and Asp-494 each bind ATP; that span reads GEGKT. The tract at residues 520-549 is disordered; sequence LDPDNPLGSASTTSRGGGQGFGPASPKPKK.

Belongs to the SecA family. In terms of assembly, monomer and homodimer. Part of the essential Sec protein translocation apparatus which comprises SecA, SecYEG and auxiliary proteins SecDF. Other proteins may also be involved.

It is found in the cell inner membrane. The protein localises to the cellular thylakoid membrane. It localises to the cytoplasm. It carries out the reaction ATP + H2O + cellular proteinSide 1 = ADP + phosphate + cellular proteinSide 2.. Its function is as follows. Part of the Sec protein translocase complex. Interacts with the SecYEG preprotein conducting channel. Has a central role in coupling the hydrolysis of ATP to the transfer of proteins into and across the cell membrane, serving as an ATP-driven molecular motor driving the stepwise translocation of polypeptide chains across the membrane. In terms of biological role, probably participates in protein translocation into and across both the cytoplasmic and thylakoid membranes in cyanobacterial cells. The chain is Protein translocase subunit SecA from Synechococcus sp. (strain JA-3-3Ab) (Cyanobacteria bacterium Yellowstone A-Prime).